The primary structure comprises 130 residues: UPF0251 protein MmarC5_0986 (130 aa).

It belongs to the UPF0251 family.

In Methanococcus maripaludis (strain C5 / ATCC BAA-1333), this protein is UPF0251 protein MmarC5_0986.